We begin with the raw amino-acid sequence, 629 residues long: tRNA uridine 5-carboxymethylaminomethyl modification enzyme MnmG (629 aa).

Residues 13–18 (GGGHAG), V125, and S180 each bind FAD. 273 to 287 (GPRYCPSIEDKIHRF) contributes to the NAD(+) binding site. An FAD-binding site is contributed by Q370.

The protein belongs to the MnmG family. In terms of assembly, homodimer. Heterotetramer of two MnmE and two MnmG subunits. FAD is required as a cofactor.

Its subcellular location is the cytoplasm. In terms of biological role, NAD-binding protein involved in the addition of a carboxymethylaminomethyl (cmnm) group at the wobble position (U34) of certain tRNAs, forming tRNA-cmnm(5)s(2)U34. This is tRNA uridine 5-carboxymethylaminomethyl modification enzyme MnmG from Shewanella sp. (strain ANA-3).